A 591-amino-acid polypeptide reads, in one-letter code: DDB1- and CUL4-associated factor 8 (591 aa).

A compositionally biased stretch (polar residues) spans 1 to 25 (MSNKRPNTTDGRTDLANGSLSSSPE). Residues 1 to 140 (MSNKRPNTTD…EDWVSSETTA (140 aa)) form a disordered region. Ser22 and Ser23 each carry phosphoserine. The short motif at 40–51 (IEVEASDLSLSL) is the Nuclear export signal element. 2 stretches are compositionally biased toward basic and acidic residues: residues 66-100 (RGTD…HGHS) and 118-131 (SRDQ…RALE). Ser100, Ser123, and Ser124 each carry phosphoserine. 7 WD repeats span residues 185–224 (GHTG…PVLD), 228–269 (GHKS…CCKN), 275–315 (QHKG…PASK), 323–363 (EKKV…ENEN), 379–418 (ESKA…GAQY), 426–466 (RNNA…IIQF), and 470–509 (DKGG…STEL). Arg198 is modified (omega-N-methylarginine; by PRMT1). Positions 552 to 591 (HRRWREPGVGATDADSDESPSSSDTSDEEEGPDRVQCMPS) are disordered.

Belongs to the WD repeat DCAF8 family. Interacts with DDB1, CUL4A and CUL4B. Interacts with KPNA1, KPNB1 and XPO1. Expressed in the brain.

Its subcellular location is the nucleus. It localises to the cytoplasm. It functions in the pathway protein modification; protein ubiquitination. Functionally, may function as a substrate receptor for CUL4-DDB1 E3 ubiquitin-protein ligase complex. The protein is DDB1- and CUL4-associated factor 8 (Dcaf8) of Mus musculus (Mouse).